Here is a 98-residue protein sequence, read N- to C-terminus: MRGNNPTLREYILDLHPEPTDLFCYEQLCDSSDEDEIGLDGPDGQAQPATANYYIVTCCYTCGTTVRLCINSTTTDVRTLQQLLMGTCTIVCPSCAQQ.

Residue Met-1 forms a Peptide (Met-Gly) (interchain with G-Cter in ubiquitin); by host linkage. An E7 terminal domain region spans residues 1–41 (MRGNNPTLREYILDLHPEPTDLFCYEQLCDSSDEDEIGLDG). The LXCXE motif; interaction with host RB1 and TMEM173/STING motif lies at 22–26 (LFCYE). A zinc finger spans residues 59-95 (CYTCGTTVRLCINSTTTDVRTLQQLLMGTCTIVCPSC). Residues 77–85 (VRTLQQLLM) carry the Nuclear export signal motif.

The protein belongs to the papillomaviridae E7 protein family. In terms of assembly, homodimer. Homooligomer. Interacts with host RB1; this interaction induces dissociation of RB1-E2F1 complex thereby disrupting RB1 activity. Interacts with host EP300; this interaction represses EP300 transcriptional activity. Interacts with protein E2; this interaction inhibits E7 oncogenic activity. Interacts with host TMEM173/STING; this interaction impairs the ability of TMEM173/STING to sense cytosolic DNA and promote the production of type I interferon (IFN-alpha and IFN-beta). Highly phosphorylated.

The protein resides in the host cytoplasm. It is found in the host nucleus. Functionally, plays a role in viral genome replication by driving entry of quiescent cells into the cell cycle. Stimulation of progression from G1 to S phase allows the virus to efficiently use the cellular DNA replicating machinery to achieve viral genome replication. E7 protein has both transforming and trans-activating activities. Induces the disassembly of the E2F1 transcription factor from RB1, with subsequent transcriptional activation of E2F1-regulated S-phase genes. Interferes with host histone deacetylation mediated by HDAC1 and HDAC2, leading to transcription activation. Also plays a role in the inhibition of both antiviral and antiproliferative functions of host interferon alpha. Interaction with host TMEM173/STING impairs the ability of TMEM173/STING to sense cytosolic DNA and promote the production of type I interferon (IFN-alpha and IFN-beta). This Homo sapiens (Human) protein is Protein E7.